We begin with the raw amino-acid sequence, 345 residues long: Phosphoribosylformylglycinamidine cyclo-ligase (345 aa).

The protein belongs to the AIR synthase family.

The protein localises to the cytoplasm. It carries out the reaction 2-formamido-N(1)-(5-O-phospho-beta-D-ribosyl)acetamidine + ATP = 5-amino-1-(5-phospho-beta-D-ribosyl)imidazole + ADP + phosphate + H(+). The protein operates within purine metabolism; IMP biosynthesis via de novo pathway; 5-amino-1-(5-phospho-D-ribosyl)imidazole from N(2)-formyl-N(1)-(5-phospho-D-ribosyl)glycinamide: step 2/2. This is Phosphoribosylformylglycinamidine cyclo-ligase from Pectobacterium atrosepticum (strain SCRI 1043 / ATCC BAA-672) (Erwinia carotovora subsp. atroseptica).